A 285-amino-acid polypeptide reads, in one-letter code: MDIFLAILPAIFWGSIVLFNVKLGGGPYSQTLGTTFGALIFSIVVYIFMKPVLTPTVIGVGIVSGLFWALGQANQLKSIDLMGVSRTMPISTGLQLVSTTLFGVIVFHEWSTIISVVLGVLALVCIIIGVILTSLQSEEEKNAEQAGNFKRGIIILLISTVGYLVYVVVIRLFNVDGWSALLPQAVGMVLGGILLTFKHHPFNKYAIRNIIPGLIWAAGNMFLFISQPRVGVATSFSLSQMGIIISTLGGILILGERKTKRQLTGIVVGIVFIIAAGIMLGIAKS.

The next 10 helical transmembrane spans lie at 4 to 21, 26 to 48, 52 to 71, 84 to 106, 110 to 132, 153 to 175, 180 to 197, 210 to 227, 232 to 254, and 266 to 283; these read FLAILPAIFWGSIVLFNV, GPYSQTLGTTFGALIFSIVVYIF, VLTPTVIGVGIVSGLFWALG, VSRTMPISTGLQLVSTTLFGVIV, WSTIISVVLGVLALVCIIIGVIL, IIILLISTVGYLVYVVVIRLFNV, ALLPQAVGMVLGGILLTF, IIPGLIWAAGNMFLFISQ, VATSFSLSQMGIIISTLGGILIL, and IVVGIVFIIAAGIMLGIA.

Belongs to the GRP transporter (TC 2.A.7.5) family.

The protein localises to the cell membrane. Functionally, involved in the uptake of glucose. The chain is Probable glucose uptake protein GlcU (glcU) from Bacillus anthracis.